The chain runs to 698 residues: Methionine--tRNA ligase (698 aa).

Residues 21–31 (PYANGPLHFGH) carry the 'HIGH' region motif. Residues Cys153, Cys156, Cys166, and Cys169 each coordinate Zn(2+). Positions 341-345 (QFSKS) match the 'KMSKS' region motif. Lys344 contributes to the ATP binding site. A tRNA-binding domain is found at 599 to 698 (DFRKLDLRVG…EDVAPGSLVS (100 aa)).

This sequence belongs to the class-I aminoacyl-tRNA synthetase family. MetG type 1 subfamily. In terms of assembly, homodimer. Zn(2+) serves as cofactor.

The protein localises to the cytoplasm. The enzyme catalyses tRNA(Met) + L-methionine + ATP = L-methionyl-tRNA(Met) + AMP + diphosphate. Is required not only for elongation of protein synthesis but also for the initiation of all mRNA translation through initiator tRNA(fMet) aminoacylation. The polypeptide is Methionine--tRNA ligase (Protochlamydia amoebophila (strain UWE25)).